Reading from the N-terminus, the 283-residue chain is MFRDVLKTLPQYLIPKHGITALAGYFADVKNPRLKNFLIQNFIRKFDVDMSEALIEDPKSYDCFNDFFIRHLKPECRPLSQSDVICPVDGCISEIGKIERGQLLQAKGKYYSVQELLACDGQLAEQFVQGQFATLYLSPKDYHRVHMPIDAELVSMTYIPGALFSVQPATTRVVPKLFARNERLAIFFKTKIGPMVMVMVGATIVGAIGTSWHGDVKRSKELERFDYSEQFLDKIISQGSEMGYFKLGSTVVLLFANGEKIQWDKELLAGSKIQLGKPMAIIT.

Catalysis depends on charge relay system; for autoendoproteolytic cleavage activity residues aspartate 89, histidine 146, and serine 249. Serine 249 functions as the Schiff-base intermediate with substrate; via pyruvic acid; for decarboxylase activity in the catalytic mechanism. Serine 249 is modified (pyruvic acid (Ser); by autocatalysis).

The protein belongs to the phosphatidylserine decarboxylase family. PSD-B subfamily. Prokaryotic type I sub-subfamily. In terms of assembly, heterodimer of a large membrane-associated beta subunit and a small pyruvoyl-containing alpha subunit. The cofactor is pyruvate. Is synthesized initially as an inactive proenzyme. Formation of the active enzyme involves a self-maturation process in which the active site pyruvoyl group is generated from an internal serine residue via an autocatalytic post-translational modification. Two non-identical subunits are generated from the proenzyme in this reaction, and the pyruvate is formed at the N-terminus of the alpha chain, which is derived from the carboxyl end of the proenzyme. The autoendoproteolytic cleavage occurs by a canonical serine protease mechanism, in which the side chain hydroxyl group of the serine supplies its oxygen atom to form the C-terminus of the beta chain, while the remainder of the serine residue undergoes an oxidative deamination to produce ammonia and the pyruvoyl prosthetic group on the alpha chain. During this reaction, the Ser that is part of the protease active site of the proenzyme becomes the pyruvoyl prosthetic group, which constitutes an essential element of the active site of the mature decarboxylase.

The protein resides in the cell membrane. The catalysed reaction is a 1,2-diacyl-sn-glycero-3-phospho-L-serine + H(+) = a 1,2-diacyl-sn-glycero-3-phosphoethanolamine + CO2. The protein operates within phospholipid metabolism; phosphatidylethanolamine biosynthesis; phosphatidylethanolamine from CDP-diacylglycerol: step 2/2. Functionally, catalyzes the formation of phosphatidylethanolamine (PtdEtn) from phosphatidylserine (PtdSer). This Legionella pneumophila subsp. pneumophila (strain Philadelphia 1 / ATCC 33152 / DSM 7513) protein is Phosphatidylserine decarboxylase proenzyme.